Consider the following 219-residue polypeptide: Deoxyribose-phosphate aldolase (219 aa).

Asp89 serves as the catalytic Proton donor/acceptor. Lys151 serves as the catalytic Schiff-base intermediate with acetaldehyde. The active-site Proton donor/acceptor is the Lys180.

It belongs to the DeoC/FbaB aldolase family. DeoC type 1 subfamily.

The protein resides in the cytoplasm. The catalysed reaction is 2-deoxy-D-ribose 5-phosphate = D-glyceraldehyde 3-phosphate + acetaldehyde. It functions in the pathway carbohydrate degradation; 2-deoxy-D-ribose 1-phosphate degradation; D-glyceraldehyde 3-phosphate and acetaldehyde from 2-deoxy-alpha-D-ribose 1-phosphate: step 2/2. Its function is as follows. Catalyzes a reversible aldol reaction between acetaldehyde and D-glyceraldehyde 3-phosphate to generate 2-deoxy-D-ribose 5-phosphate. The sequence is that of Deoxyribose-phosphate aldolase from Coprothermobacter proteolyticus (strain ATCC 35245 / DSM 5265 / OCM 4 / BT).